The chain runs to 1564 residues: ATP-dependent permease PDR10 (1564 aa).

A compositionally biased stretch (polar residues) spans 1-16; the sequence is MLQAPSSSNSGLNQGN. Positions 1–37 are disordered; that stretch reads MLQAPSSSNSGLNQGNAAPDGPPNETQPYEGLDAAAQ. The Cytoplasmic portion of the chain corresponds to 1 to 587; it reads MLQAPSSSNS…AAIFFAILFN (587 aa). The ABC transporter 1 domain maps to 174 to 430; it reads ISRRLFHRTH…FQRMGYVCPE (257 aa). 5 helical membrane passes run 588 to 608, 624 to 644, 674 to 694, 699 to 719, and 732 to 752; these read AFSS…TEKH, TFSD…PYYF, RCIG…SVLL, MYTG…WISY, and INEF…GPNY. Asparagine 754 carries N-linked (GlcNAc...) asparagine glycosylation. Residues 839–849 show a composition bias toward basic residues; sequence KGIVSEKKKKN. The segment at 839-872 is disordered; it reads KGIVSEKKKKNQPTLSTSDAEKDVEMNNNSSATD. The chain crosses the membrane as a helical span at residues 841 to 861; that stretch reads IVSEKKKKNQPTLSTSDAEKD. Residues 862 to 1304 lie on the Cytoplasmic side of the membrane; it reads VEMNNNSSAT…IFMFTVVFNP (443 aa). An ABC transporter 2 domain is found at 923–1166; sequence FHWKNLCYDI…MINYFEAHGA (244 aa). 959–966 provides a ligand contact to ATP; sequence GASGAGKT. 6 consecutive transmembrane segments (helical) span residues 1305-1325, 1340-1360, 1390-1410, 1426-1446, 1459-1479, and 1491-1511; these read ILQQ…ARER, ILVE…VYYY, VYIS…ENAA, VLAT…VSPL, ANAS…PSGM, and STGT…FCQF. The Cytoplasmic segment spans residues 1512-1564; the sequence is SSTNDYLATVSSSYSRRWMNYGIFSAYIVFDYCAAIFLYWLVRVPKKSKKLKK.

The protein belongs to the ABC transporter superfamily. ABCG family. PDR (TC 3.A.1.205) subfamily.

Its subcellular location is the membrane. The polypeptide is ATP-dependent permease PDR10 (PDR10) (Saccharomyces cerevisiae (strain ATCC 204508 / S288c) (Baker's yeast)).